The primary structure comprises 336 residues: D-alanine--D-alanine ligase (336 aa).

One can recognise an ATP-grasp domain in the interval 124-330 (KMWFSALGIP…FTEYLSLVIN (207 aa)). 154 to 209 (ALENWGSIFVKAASQGSSVGCYKVDDSSKVADVLKDAFGYAPYVIVEKTIKARELE) contributes to the ATP binding site. The Mg(2+) site is built by D284, E297, and N299.

Belongs to the D-alanine--D-alanine ligase family. Requires Mg(2+) as cofactor. The cofactor is Mn(2+).

The protein localises to the cytoplasm. It carries out the reaction 2 D-alanine + ATP = D-alanyl-D-alanine + ADP + phosphate + H(+). Its pathway is cell wall biogenesis; peptidoglycan biosynthesis. Functionally, cell wall formation. This chain is D-alanine--D-alanine ligase, found in Shewanella sp. (strain ANA-3).